A 791-amino-acid chain; its full sequence is Transient receptor potential cation channel subfamily V member 3 (791 aa).

Disordered stretches follow at residues 1-37 (MNAH…LTPT), 52-71 (PNPT…MDSN), and 76-113 (LSGN…EEQR). Topologically, residues 1–430 (MNAHSKEMAP…TLEPLHTLLH (430 aa)) are cytoplasmic. Residues 95-105 (ETPSNPNSPSA) show a composition bias toward polar residues. 7 ANK repeats span residues 117-148 (KRLK…LCRR), 170-198 (TCLM…EEND), 214-243 (EGQT…DVNA), 261-291 (FGET…DITS), 298-330 (NILH…RSGN), 340-362 (DGLT…YILS), and 398-420 (TTDN…HEML). Residues 431–460 (TKWKKFAKYMFFLSFCFYFFYNITLTLVSY) form a helical membrane-spanning segment. Residues 461-479 (YRPREDEDLPHPLALTHKM) are Extracellular-facing. The chain crosses the membrane as a helical span at residues 480–508 (SWLQLLGRMFVLIWATCISVKEGIAIFLL). Topologically, residues 509–519 (RPSDLQSILSD) are cytoplasmic. The helical transmembrane segment at 520-540 (AWFHFVFFVQAVLVILSVFLY) threads the bilayer. Residues 541 to 545 (LFAYK) lie on the Extracellular side of the membrane. The chain crosses the membrane as a helical span at residues 546-566 (EYLACLVLAMALGWANMLYYT). Residues 567 to 569 (RGF) lie on the Cytoplasmic side of the membrane. A helical membrane pass occupies residues 570–608 (QSMGMYSVMIQKVILHDVLKFLFVYILFLLGFGVALASL). At 609–620 (IEKCSKDKKDCS) the chain is on the extracellular side. An intramembrane region (pore-forming) is located at residues 621–646 (SYGSFSDAVLELFKLTIGLGDLNIQQ). Position 638 (glycine 638) interacts with Na(+). The Extracellular portion of the chain corresponds to 647–649 (NST). The helical transmembrane segment at 650–686 (YPILFLFLLITYVILTFVLLLNMLIALMGETVENVSK) threads the bilayer. Residues 687–791 (ESERIWRLQR…ELDEFPETSV (105 aa)) are Cytoplasmic-facing.

The protein belongs to the transient receptor (TC 1.A.4) family. TrpV subfamily. TRPV3 sub-subfamily. In terms of assembly, homotetramer. May convert from a homotetramer to a homopentamer to allow pore dilation. Interacts with TRPV1; may form a heteromeric channel with TRPV1. Interacts with SNX11; this interaction promotes TRPV3 trafficking from the cell membrane to lysosome for degradation. As to expression, expressed in keratinocytes and hair follicles.

The protein localises to the cell membrane. The protein resides in the cytoplasm. Its subcellular location is the lysosome. It carries out the reaction Ca(2+)(in) = Ca(2+)(out). The catalysed reaction is Mg(2+)(in) = Mg(2+)(out). It catalyses the reaction Na(+)(in) = Na(+)(out). The enzyme catalyses K(+)(in) = K(+)(out). Its activity is regulated as follows. Activated by cannabinoid that binds to the vanilloid binding pocket. Diphenylboronic anhydride induces pore dilation and enhances cation permeability by promoting the conversion to a homopentamer. Non-selective calcium permeant cation channel. It is activated by innocuous (warm) temperatures and shows an increased response at noxious temperatures greater than 39 degrees Celsius. Activation exhibits an outward rectification. The channel pore can dilate to provide permeability to larger cations. May associate with TRPV1 and may modulate its activity. Is a negative regulator of hair growth and cycling: TRPV3-coupled signaling suppresses keratinocyte proliferation in hair follicles and induces apoptosis and premature hair follicle regression (catagen). In Mus musculus (Mouse), this protein is Transient receptor potential cation channel subfamily V member 3 (Trpv3).